Here is a 208-residue protein sequence, read N- to C-terminus: Imidazoleglycerol-phosphate dehydratase (208 aa).

It belongs to the imidazoleglycerol-phosphate dehydratase family.

Its subcellular location is the cytoplasm. It carries out the reaction D-erythro-1-(imidazol-4-yl)glycerol 3-phosphate = 3-(imidazol-4-yl)-2-oxopropyl phosphate + H2O. The protein operates within amino-acid biosynthesis; L-histidine biosynthesis; L-histidine from 5-phospho-alpha-D-ribose 1-diphosphate: step 6/9. This chain is Imidazoleglycerol-phosphate dehydratase, found in Mycobacterium sp. (strain JLS).